Reading from the N-terminus, the 177-residue chain is Large ribosomal subunit protein uL6 (177 aa).

The protein belongs to the universal ribosomal protein uL6 family. Part of the 50S ribosomal subunit.

In terms of biological role, this protein binds to the 23S rRNA, and is important in its secondary structure. It is located near the subunit interface in the base of the L7/L12 stalk, and near the tRNA binding site of the peptidyltransferase center. The polypeptide is Large ribosomal subunit protein uL6 (Pseudomonas putida (strain W619)).